A 133-amino-acid polypeptide reads, in one-letter code: Nickel-responsive regulator (133 aa).

Ni(2+) contacts are provided by His76, His87, His89, and Cys95.

It belongs to the transcriptional regulatory CopG/NikR family. Homotetramer. Requires Ni(2+) as cofactor.

Functionally, transcriptional repressor of the nikABCDE operon. Is active in the presence of excessive concentrations of intracellular nickel. The protein is Nickel-responsive regulator of Salmonella choleraesuis (strain SC-B67).